A 490-amino-acid polypeptide reads, in one-letter code: Glutamyl-tRNA(Gln) amidotransferase subunit A (490 aa).

Active-site charge relay system residues include Lys79 and Ser154. The active-site Acyl-ester intermediate is the Ser178.

It belongs to the amidase family. GatA subfamily. Heterotrimer of A, B and C subunits.

The enzyme catalyses L-glutamyl-tRNA(Gln) + L-glutamine + ATP + H2O = L-glutaminyl-tRNA(Gln) + L-glutamate + ADP + phosphate + H(+). Functionally, allows the formation of correctly charged Gln-tRNA(Gln) through the transamidation of misacylated Glu-tRNA(Gln) in organisms which lack glutaminyl-tRNA synthetase. The reaction takes place in the presence of glutamine and ATP through an activated gamma-phospho-Glu-tRNA(Gln). The polypeptide is Glutamyl-tRNA(Gln) amidotransferase subunit A (Roseiflexus castenholzii (strain DSM 13941 / HLO8)).